Reading from the N-terminus, the 659-residue chain is Acetyl-coenzyme A synthetase (659 aa).

CoA contacts are provided by residues 206 to 209 (RRGK) and threonine 324. Residues 400–402 (GEP), 424–429 (DTWWQT), aspartate 516, arginine 531, and arginine 542 contribute to the ATP site. Residues valine 553 and histidine 555 each contribute to the Mg(2+) site. Arginine 600 contacts CoA.

Belongs to the ATP-dependent AMP-binding enzyme family. The cofactor is Mg(2+).

The catalysed reaction is acetate + ATP + CoA = acetyl-CoA + AMP + diphosphate. Its function is as follows. Catalyzes the conversion of acetate into acetyl-CoA (AcCoA), an essential intermediate at the junction of anabolic and catabolic pathways. AcsA undergoes a two-step reaction. In the first half reaction, AcsA combines acetate with ATP to form acetyl-adenylate (AcAMP) intermediate. In the second half reaction, it can then transfer the acetyl group from AcAMP to the sulfhydryl group of CoA, forming the product AcCoA. The protein is Acetyl-coenzyme A synthetase (acsA) of Methanothrix thermoacetophila (strain DSM 6194 / JCM 14653 / NBRC 101360 / PT) (Methanosaeta thermophila).